The following is a 206-amino-acid chain: 3-isopropylmalate dehydratase small subunit (206 aa).

Belongs to the LeuD family. LeuD type 1 subfamily. In terms of assembly, heterodimer of LeuC and LeuD.

The enzyme catalyses (2R,3S)-3-isopropylmalate = (2S)-2-isopropylmalate. The protein operates within amino-acid biosynthesis; L-leucine biosynthesis; L-leucine from 3-methyl-2-oxobutanoate: step 2/4. Catalyzes the isomerization between 2-isopropylmalate and 3-isopropylmalate, via the formation of 2-isopropylmaleate. The polypeptide is 3-isopropylmalate dehydratase small subunit (Leptospira interrogans serogroup Icterohaemorrhagiae serovar copenhageni (strain Fiocruz L1-130)).